The primary structure comprises 828 residues: Cadherin-22 (828 aa).

The signal sequence occupies residues 1-34; sequence MRPRPEGRGLRAGVALSPALLLLLLLPPPPTLLG. Residues 36 to 624 are Extracellular-facing; the sequence is LWAAGTPSPS…AFVMAASLSP (589 aa). 5 consecutive Cadherin domains span residues 64-168, 169-277, 278-394, 395-498, and 499-616; these read WVWN…EPRF, LHGP…PPRF, PQKM…PPEF, RPPS…NPPE, and LATP…TTAF. Residue N162 is glycosylated (N-linked (GlcNAc...) asparagine). N-linked (GlcNAc...) asparagine glycosylation is found at N466 and N612. A helical transmembrane segment spans residues 625–645; it reads GALIALLVCVLILVVLVLLIL. Residues 646–828 are Cytoplasmic-facing; it reads TLRRHHKSHL…HRGDDEAQAS (183 aa). The segment covering 702 to 719 has biased composition (gly residues); that stretch reads GGGSAGGGAGGGSGGGAG. The tract at residues 702–745 is disordered; it reads GGGSAGGGAGGGSGGGAGSPPQAHLPSERHSLPQGPPSPEPDFS.

The protein resides in the cell membrane. Cadherins are calcium-dependent cell adhesion proteins. They preferentially interact with themselves in a homophilic manner in connecting cells; cadherins may thus contribute to the sorting of heterogeneous cell types. PB-cadherins may have a role in the morphological organization of pituitary gland and brain tissues. The polypeptide is Cadherin-22 (CDH22) (Homo sapiens (Human)).